We begin with the raw amino-acid sequence, 748 residues long: Structure-specific endonuclease subunit SLX4 (748 aa).

The span at 62–75 (KSVTAQKSPMTQET) shows a compositional bias: polar residues. Residues 62-104 (KSVTAQKSPMTQETTKNDTERNKDVDKSCNPVSTSHPDLGGSN) form a disordered region. A Phosphothreonine; by ATR and ATM modification is found at T72. The span at 76 to 88 (TKNDTERNKDVDK) shows a compositional bias: basic and acidic residues. Residue T113 is modified to Phosphothreonine; by ATR and ATM. Disordered stretches follow at residues 215–236 (IKTQ…KGEK) and 277–303 (EKSS…PPEL). A compositionally biased stretch (basic and acidic residues) spans 222–236 (NSDKPPRARNNKGEK). The span at 277–298 (EKSSNSLDNQESSQQRLWTASQ) shows a compositional bias: polar residues. Position 289 is a phosphoserine; by ATR and ATM (S289). The residue at position 319 (T319) is a Phosphothreonine; by ATR and ATM. A phosphoserine; by ATR and ATM mark is found at S329 and S355. Residues 591 to 602 (ISTKDSTQNPTT) are compositionally biased toward polar residues. The interval 591 to 610 (ISTKDSTQNPTTSNDIIDTS) is disordered.

This sequence belongs to the SLX4 family. Forms a heterodimer with SLX1. Interacts with RAD1; catalytic subunit of the RAD1-RAD10 endonuclease. Interacts with RTT107. Post-translationally, phosphorylated by ATR (MEC1) and ATM (TEL1) upon DNA damage. This appears to be required for the function with the RAD1-RAD10 endonuclease.

The protein localises to the nucleus. It is found in the cytoplasm. Regulatory subunit that interacts with and increases the activity of different structure-specific endonucleases. Has several distinct roles in protecting genome stability by resolving diverse forms of deleterious DNA structures. Component of the SLX1-SLX4 structure-specific endonuclease that resolves DNA secondary structures generated during DNA repair and recombination. Has endonuclease activity towards branched DNA substrates, introducing single-strand cuts in duplex DNA close to junctions with ss-DNA. Has a preference for simple Y, 5'-flap and replication fork-like structures. It cleaves the strand bearing the 5'-non-homologous arm at the branch site junction and generates ligatable, nicked products from the 5'-flap or replication fork substrates. Plays a critical role in maintaining the integrity of the ribosomal DNA (rDNA) loci, where it has a role in re-starting stalled replication forks. Has Holliday junction resolvase activity in vitro. Interacts with the structure-specific RAD1-RAD10 endonuclease and promotes RAD1-RAD10-dependent 3'-non-homologous tail removal (NHTR) during repair of double-strand breaks by single-strand annealing. SLX4 also promotes recovery from DNA-alkylation-induced replisome stalling during DNA replication by facilitating the error-free mode of lesion bypass. This does not require SLX1 or RAD1-RAD10, but probably RTT107. This chain is Structure-specific endonuclease subunit SLX4, found in Saccharomyces cerevisiae (strain RM11-1a) (Baker's yeast).